Reading from the N-terminus, the 749-residue chain is 5-methyltetrahydropteroyltriglutamate--homocysteine methyltransferase (749 aa).

5-methyltetrahydropteroyltri-L-glutamate contacts are provided by residues 15–18 (RELK) and K114. L-homocysteine contacts are provided by residues 425–427 (IGS) and E478. Residues 425 to 427 (IGS) and E478 each bind L-methionine. 5-methyltetrahydropteroyltri-L-glutamate is bound at residue W555. Residue D593 participates in L-homocysteine binding. L-methionine is bound at residue D593. A 5-methyltetrahydropteroyltri-L-glutamate-binding site is contributed by E599. 3 residues coordinate Zn(2+): H636, C638, and E660. H689 (proton donor) is an active-site residue. C721 lines the Zn(2+) pocket.

This sequence belongs to the vitamin-B12 independent methionine synthase family. It depends on Zn(2+) as a cofactor.

The catalysed reaction is 5-methyltetrahydropteroyltri-L-glutamate + L-homocysteine = tetrahydropteroyltri-L-glutamate + L-methionine. The protein operates within amino-acid biosynthesis; L-methionine biosynthesis via de novo pathway; L-methionine from L-homocysteine (MetE route): step 1/1. In terms of biological role, catalyzes the transfer of a methyl group from 5-methyltetrahydrofolate to homocysteine resulting in methionine formation. This chain is 5-methyltetrahydropteroyltriglutamate--homocysteine methyltransferase, found in Streptococcus pneumoniae serotype 2 (strain D39 / NCTC 7466).